Here is a 530-residue protein sequence, read N- to C-terminus: Vesicular acetylcholine transporter (530 aa).

The Cytoplasmic segment spans residues 1 to 33; that stretch reads MEPTAPTGQARAAATKLSEAVGAALQEPQRQRR. The helical transmembrane segment at 34–54 threads the bilayer; the sequence is LVLVIVCVALLLDNMLYMVIV. Residues 55–125 lie on the Lumenal, vesicle side of the membrane; the sequence is PIVPDYIAHM…PTESEDVKIG (71 aa). 2 N-linked (GlcNAc...) asparagine glycosylation sites follow: Asn-89 and Asn-96. A helical transmembrane segment spans residues 126-146; sequence VLFASKAILQLLVNPLSGPFI. Over 147 to 152 the chain is Cytoplasmic; it reads DRMSYD. Residues 153–173 traverse the membrane as a helical segment; the sequence is VPLLIGLGVMFASTVMFAFAE. Over 174-182 the chain is Lumenal, vesicle; sequence DYATLFAAR. The chain crosses the membrane as a helical span at residues 183–203; sequence SLQGLGSAFADTSGIAMIADK. The Cytoplasmic portion of the chain corresponds to 204–213; the sequence is YPEEPERSRA. The chain crosses the membrane as a helical span at residues 214-234; sequence LGVALAFISFGSLVAPPFGGI. The Lumenal, vesicle portion of the chain corresponds to 235 to 242; the sequence is LYEFAGKR. The chain crosses the membrane as a helical span at residues 243-263; sequence VPFLVLAAVSLFDALLLLAVA. Over 264–289 the chain is Cytoplasmic; sequence KPFSAAARARANLPVGTPIHRLMLDP. Residues 290 to 310 traverse the membrane as a helical segment; sequence YIAVVAGALTTCNIPLAFLEP. The Lumenal, vesicle portion of the chain corresponds to 311 to 325; that stretch reads TIATWMKHTMAASEW. Residues 326-346 form a helical membrane-spanning segment; it reads EMGMVWLPAFVPHVLGVYLTV. Residues 347–356 are Cytoplasmic-facing; sequence RLAARYPHLQ. A helical membrane pass occupies residues 357–377; it reads WLYGALGLAVIGVSSCVVPAC. Over 378 to 388 the chain is Lumenal, vesicle; sequence RSFAPLVVSLC. Residues 389–409 traverse the membrane as a helical segment; that stretch reads GLCFGIALVDTALLPTLAFLV. Residues 410–422 lie on the Cytoplasmic side of the membrane; that stretch reads DVRHVSVYGSVYA. The helical transmembrane segment at 423–443 threads the bilayer; it reads IADISYSVAYALGPIVAGHIV. Over 444 to 447 the chain is Lumenal, vesicle; it reads HSLG. The helical transmembrane segment at 448-468 threads the bilayer; sequence FEQLSLGMGLANLLYAPVLLL. At 469–530 the chain is on the cytoplasmic side; the sequence is LRNVGLLTRS…EDDYNYYSRS (62 aa). The segment at 471 to 530 is mediates interaction with SEC14L1; that stretch reads NVGLLTRSRSERDVLLDEPPQGLYDAVRLREVQGKDGGEPCSPPGPFDGCEDDYNYYSRS. Residues 504–530 are disordered; sequence GKDGGEPCSPPGPFDGCEDDYNYYSRS.

This sequence belongs to the major facilitator superfamily. Vesicular transporter family. Interacts with SEC14L1. As to expression, high expression in all major cholinergic cell groups, including peripheral postganglionic parasympathetic cells, preganglionic sympathetic and parasympathetic cells, ventral spinal cord and brainstem motoneurons, cell groups in the basal forebrain, the habenula and the corpus striatum. Weakly expressed in the cortex and hippocampus.

It is found in the cytoplasmic vesicle. The protein localises to the secretory vesicle. The protein resides in the synaptic vesicle membrane. It catalyses the reaction acetylcholine(out) + 2 H(+)(in) = acetylcholine(in) + 2 H(+)(out). It carries out the reaction choline(in) + 2 H(+)(out) = choline(out) + 2 H(+)(in). The enzyme catalyses serotonin(in) + 2 H(+)(out) = serotonin(out) + 2 H(+)(in). With respect to regulation, potently inhibited by L-vesamicol. Its function is as follows. Electrogenic antiporter that exchanges one cholinergic neurotransmitter, acetylcholine or choline, with two intravesicular protons across the membrane of synaptic vesicles. Uses the electrochemical proton gradient established by the V-type proton-pump ATPase to store neurotransmitters inside the vesicles prior to their release via exocytosis. Determines cholinergic vesicular quantal size at presynaptic nerve terminals in developing neuro-muscular junctions with an impact on motor neuron differentiation and innervation pattern. Part of forebrain cholinergic system, regulates hippocampal synapse transmissions that underlie spatial memory formation. Can transport serotonin. The sequence is that of Vesicular acetylcholine transporter (Slc18a3) from Rattus norvegicus (Rat).